Consider the following 622-residue polypeptide: Putative DEAD-box ATP-dependent RNA helicase 44 (622 aa).

The segment at 50–97 is disordered; the sequence is DRRSIVQISRSNSDNDDGNRPRDVKRERHRSHDHDRNRESDREFRERE. The span at 66-97 shows a compositional bias: basic and acidic residues; sequence DGNRPRDVKRERHRSHDHDRNRESDREFRERE. In terms of domain architecture, Helicase ATP-binding spans 241 to 436; sequence IPLGLEQRDV…RKFLRNPVVV (196 aa). Position 254–261 (254–261) interacts with ATP; that stretch reads SATGSGKT. The DEAD box motif lies at 367 to 370; that stretch reads DEAD. A Helicase C-terminal domain is found at 460-606; that stretch reads RLKKLIDDLG…LVPPELARHE (147 aa).

It belongs to the DEAD box helicase family. DDX23/PRP28 subfamily.

The catalysed reaction is ATP + H2O = ADP + phosphate + H(+). The polypeptide is Putative DEAD-box ATP-dependent RNA helicase 44 (RH44) (Arabidopsis thaliana (Mouse-ear cress)).